The sequence spans 184 residues: ATP synthase subunit b, chloroplastic (184 aa).

The helical transmembrane segment at 29–49 (INLINLILVLGILFYYGKGVL) threads the bilayer.

This sequence belongs to the ATPase B chain family. As to quaternary structure, F-type ATPases have 2 components, F(1) - the catalytic core - and F(0) - the membrane proton channel. F(1) has five subunits: alpha(3), beta(3), gamma(1), delta(1), epsilon(1). F(0) has four main subunits: a(1), b(1), b'(1) and c(10-14). The alpha and beta chains form an alternating ring which encloses part of the gamma chain. F(1) is attached to F(0) by a central stalk formed by the gamma and epsilon chains, while a peripheral stalk is formed by the delta, b and b' chains.

Its subcellular location is the plastid. The protein localises to the chloroplast thylakoid membrane. Its function is as follows. F(1)F(0) ATP synthase produces ATP from ADP in the presence of a proton or sodium gradient. F-type ATPases consist of two structural domains, F(1) containing the extramembraneous catalytic core and F(0) containing the membrane proton channel, linked together by a central stalk and a peripheral stalk. During catalysis, ATP synthesis in the catalytic domain of F(1) is coupled via a rotary mechanism of the central stalk subunits to proton translocation. In terms of biological role, component of the F(0) channel, it forms part of the peripheral stalk, linking F(1) to F(0). The sequence is that of ATP synthase subunit b, chloroplastic from Adiantum capillus-veneris (Maidenhair fern).